A 533-amino-acid polypeptide reads, in one-letter code: Non-specific phospholipase C1 (533 aa).

An N-terminal signal peptide occupies residues 1–22 (MAFRRVLTTVILFCYLLISSQS).

This sequence belongs to the bacterial phospholipase C family. As to expression, expressed in roots, leaves, stems, flowers and siliques.

It is found in the secreted. This chain is Non-specific phospholipase C1 (NPC1), found in Arabidopsis thaliana (Mouse-ear cress).